The primary structure comprises 816 residues: Ribonucleoside-diphosphate reductase large subunit (816 aa).

The ATP-cone domain occupies 1–92 (MYVVKRDGRQ…VSNLHKNTKK (92 aa)). Residues 5–6 (KR), 11–17 (ETVHFDK), Thr53, and Asp57 contribute to the ATP site. GDP contacts are provided by Ser202 and Ser217. Cys218 and Cys444 are disulfide-bonded. DTTP contacts are provided by residues 226–228 (DSI), Lys243, Arg256, and 263–264 (RG). Asn427 is a GDP binding site. Asn427 acts as the Proton acceptor in catalysis. The Cysteine radical intermediate role is filled by Cys429. GDP contacts are provided by residues Glu431 and 623–626 (TAST). The Proton acceptor role is filled by Glu431.

Belongs to the ribonucleoside diphosphate reductase large chain family. Heterotetramer of two large/R1 and two small/R2 subunits. A radical transfer pathway may occur between 'Tyr-125' of protein R2 and R1. In terms of processing, contains a disulfide bonds. Binding of the substrate occurs primarily when the active-site cysteines are reduced. As to expression, highly expressed in actively growing tissues such as young leaves, shoot apices, inflorescences and carpels. Very low expression in cotyledons, adult and cauline leaves and senescent leaves.

It localises to the cytoplasm. It carries out the reaction a 2'-deoxyribonucleoside 5'-diphosphate + [thioredoxin]-disulfide + H2O = a ribonucleoside 5'-diphosphate + [thioredoxin]-dithiol. With respect to regulation, under complex allosteric control mediated by deoxynucleoside triphosphates and ATP binding to separate specificity and activation sites on the large subunit. The type of nucleotide bound at the specificity site determines substrate preference. It seems probable that ATP makes the enzyme reduce CDP and UDP, dGTP favors ADP reduction and dTTP favors GDP reduction. Stimulated by ATP and inhibited by dATP binding to the activity site. In terms of biological role, provides the precursors necessary for DNA synthesis. Catalyzes the biosynthesis of deoxyribonucleotides from the corresponding ribonucleotides. R1 contains the binding sites for both substrates and allosteric effectors and carries out the actual reduction of the ribonucleotide. Ribonucleotide reductase (RNR) complex function is essential for efficient organellar DNA degradation in pollen. Involved in chloroplast division. The protein is Ribonucleoside-diphosphate reductase large subunit of Arabidopsis thaliana (Mouse-ear cress).